The sequence spans 301 residues: Probable alpha-L-glutamate ligase 1 (301 aa).

In terms of domain architecture, ATP-grasp spans 104-287; sequence LQLLSRKGIG…VTEPIVEYIE (184 aa). ATP-binding positions include Lys-141, 178-179, Asp-187, and 211-213; these read EY and RSN. Positions 248, 260, and 262 each coordinate Mg(2+). Mn(2+) contacts are provided by Asp-248, Glu-260, and Asn-262.

It belongs to the RimK family. Requires Mg(2+) as cofactor. It depends on Mn(2+) as a cofactor.

In Shewanella sp. (strain ANA-3), this protein is Probable alpha-L-glutamate ligase 1.